Consider the following 478-residue polypeptide: Protein nucleotidyltransferase YdiU (478 aa).

ATP-binding residues include G83, G85, R86, K106, D118, G119, R169, and R176. Catalysis depends on D245, which acts as the Proton acceptor. Residues N246 and D255 each contribute to the Mg(2+) site. D255 lines the ATP pocket.

It belongs to the SELO family. Mg(2+) is required as a cofactor. It depends on Mn(2+) as a cofactor.

It catalyses the reaction L-seryl-[protein] + ATP = 3-O-(5'-adenylyl)-L-seryl-[protein] + diphosphate. The catalysed reaction is L-threonyl-[protein] + ATP = 3-O-(5'-adenylyl)-L-threonyl-[protein] + diphosphate. It carries out the reaction L-tyrosyl-[protein] + ATP = O-(5'-adenylyl)-L-tyrosyl-[protein] + diphosphate. The enzyme catalyses L-histidyl-[protein] + UTP = N(tele)-(5'-uridylyl)-L-histidyl-[protein] + diphosphate. It catalyses the reaction L-seryl-[protein] + UTP = O-(5'-uridylyl)-L-seryl-[protein] + diphosphate. The catalysed reaction is L-tyrosyl-[protein] + UTP = O-(5'-uridylyl)-L-tyrosyl-[protein] + diphosphate. Functionally, nucleotidyltransferase involved in the post-translational modification of proteins. It can catalyze the addition of adenosine monophosphate (AMP) or uridine monophosphate (UMP) to a protein, resulting in modifications known as AMPylation and UMPylation. This chain is Protein nucleotidyltransferase YdiU, found in Exiguobacterium sp. (strain ATCC BAA-1283 / AT1b).